Consider the following 389-residue polypeptide: Flagellar P-ring protein (389 aa).

The signal sequence occupies residues 1-33; sequence MRPLVAARRRAAACCALAACMLALAFAPAAARA.

The protein belongs to the FlgI family. In terms of assembly, the basal body constitutes a major portion of the flagellar organelle and consists of four rings (L,P,S, and M) mounted on a central rod.

The protein localises to the periplasm. It localises to the bacterial flagellum basal body. Its function is as follows. Assembles around the rod to form the L-ring and probably protects the motor/basal body from shearing forces during rotation. This is Flagellar P-ring protein from Burkholderia pseudomallei (strain K96243).